The chain runs to 1728 residues: MDSSSIAHESDIVSTERNILPERFISNKQQGNYLEDGSGDGNGKAAEHWLLAAIFNFFWVISYFISGSTHIAFRSSWYIVSLLLLKFPKWIIVEANHIHLTIPFSVLVVTLAIIFYVSYEFLKGRLLSEYKNLTSDLNTDSLNSKNSKSSRLLHHDSKDSNTTRRRRYSSGKLLSSALHESHSGINGGDDGDDTFLSSYLDQFLSAIRIFGYLEKPVFHDLTKNMKTQKLDEGEILLLDNSVGFAIVVEGTLDIYHEVEEKGNMNDIDGDFMVDDNQSIYSILKRKKKKYSTSRHGQYNNNSDPGHYNGHNVNGDDEDDDDGILQMRSSSRNQNIPSFDAIESSSSDEESDINDGDSESQSESDDESTGFIRLKDGLGKFQLLNTVKAGNPVSSLVNILNLFTSANDNVTSPSRTGRMDSNYTNPVERPTSKLSTSIEESAMRLELGKYSLSPTEASYRSTSNPSNNFSKDNDPLSKSISGPDAVTTPSLPPLNNRAFVIPKVVARAATDCTIAIIPPQAFAKLKAKYPRSASHIIQMILTKLYHVTFQTAHKYLGLTQEIAYTELLLNRTVSYDLPNYLKEIVIDRFKDKGKDMNLQKGFQSPTSSRLTSNFNGNSNNQRTNSRNSQALMSTRDLRKTRPELSQQSSMIHSPTPITGSRHVVLESRDKYNPGDLLSNVPLSRINLASPSSRGFDYSSMKKESSPQSSVNSRKRSTTGERPRLLKRPSIYNNQSSSRSDALKGNNSNNKDINFTSFSAQEETEDSVVRMALVEAMLTYLGVNKTNMSILPGIYDGAPSEPHSHRASEISLVSSYTSSAAPQTTIRILPKEYAIVSTRKQKQSSKKRRKYKEEISPTLDYEYAKNEFAQAIELQYFKQGTVIVEQDTRGKGLYYVVSGKIDVTTSTVSDHEIFNSTRDKKKKKSKTLFTIESGGIAGYLSSLVSYKSFVTLIAKTDVYVGFLPYQTLEKLCDKYFLIYLRIAESLTSLLTPRMLKLDHALEWLHLNASDTLFNQGDPANGIYVILNGRLRQLRNPELEENSTDYPNDGEEKDSSRDSTIVMGELGQGESFGEVEVLTAMDRISSMVAVRDTELARIPRSLFELLAIEHPSIMIRVSRLVAKKILGQGQANMALPKIGSGSNLRHDLNLTIPPSSSSSIHTHSYGNDNSNQMNNANFRTITILPITSGLPVESFAMKLVHAFKQVGRTTIGLNQRTTLSHLGRHAFDKLAKLKESGYFAELEELYQTVVYIADTPVKSSWTKTCIAQADCVILLARADDSPEIGEYERLLLKSKTTSRTELVLLHNERSVEPGMTQRWLRSRSWVHNHYHIQFAMDSLVNSSNVKDTGGNIGALNLVDKFIQTELGRKTQYNISKLLPESIKMTVENFSSRFMKRKRQYYTPVHRHKDDFLRLARILSGQAIGLVLGGGGARGLSHLGILQALEERGIPIDMIGGTSIGSFVGGLYAKDYDLVPIFGRIKKFAGRISSIWRMLSDFTWPVTSYTTGHEFNRGIWKSFGDTRIEDFWVQYFCNSTNITESVQEIHSYGYAWRYVRASMSLAGLLPPIEDNGSMLLDGGYVDNLPVLEMKARGCNTIFAVDVGSVDDRTPMKYGDSLNGFWIILNRWNPFSKHPNIPTMAEIQVRLGYVSSVNALEKAKRTPGVIYVRPPIENYATLDFGKFEEIYKVGADFGKVFLQALAEEGKMPYIPGSNADLVGDVETGFFLHRRNSI.

Over 1–44 the chain is Cytoplasmic; that stretch reads MDSSSIAHESDIVSTERNILPERFISNKQQGNYLEDGSGDGNGK. A helical membrane pass occupies residues 45–65; sequence AAEHWLLAAIFNFFWVISYFI. The Lumenal segment spans residues 66–97; that stretch reads SGSTHIAFRSSWYIVSLLLLKFPKWIIVEANH. Residues 98 to 118 traverse the membrane as a helical segment; that stretch reads IHLTIPFSVLVVTLAIIFYVS. The Cytoplasmic segment spans residues 119-1728; that stretch reads YEFLKGRLLS…GFFLHRRNSI (1610 aa). Positions 141-150 are enriched in low complexity; sequence SLNSKNSKSS. Disordered stretches follow at residues 141–167, 285–368, 406–436, 454–488, 596–660, and 687–756; these read SLNS…RRRR, RKKK…DEST, NDNV…LSTS, TEAS…VTTP, NLQK…TGSR, and ASPS…FTSF. Residues 153–162 show a composition bias toward basic and acidic residues; sequence LHHDSKDSNT. Polar residues-rich tracts occupy residues 293-303 and 326-336; these read SRHGQYNNNSD and MRSSSRNQNIP. A compositionally biased stretch (acidic residues) spans 345–367; sequence SSDEESDINDGDSESQSESDDES. 3 stretches are compositionally biased toward polar residues: residues 406-424, 454-479, and 599-609; these read NDNV…NYTN, TEAS…SKSI, and KGFQSPTSSRL. The segment covering 610–628 has biased composition (low complexity); it reads TSNFNGNSNNQRTNSRNSQ. Composition is skewed to polar residues over residues 642-657 and 729-756; these read ELSQ…TPIT and IYNN…FTSF. A nucleoside 3',5'-cyclic phosphate is bound by residues 854 to 987 and 983 to 1121; these read SPTL…LTSL and SLTS…VAKK. The tract at residues 1034 to 1055 is disordered; that stretch reads PELEENSTDYPNDGEEKDSSRD. The span at 1036 to 1049 shows a compositional bias: acidic residues; it reads LEENSTDYPNDGEE. The region spanning 1422–1586 is the PNPLA domain; that stretch reads LVLGGGGARG…VDNLPVLEMK (165 aa). The GXGXXG motif lies at 1426 to 1431; sequence GGGARG. A GXSXG motif is present at residues 1453 to 1457; it reads GTSIG. Ser-1455 acts as the Nucleophile in catalysis. Asp-1573 (proton acceptor) is an active-site residue. Residues 1573–1575 carry the DGA/G motif; that stretch reads DGG.

This sequence belongs to the NTE family.

Its subcellular location is the endoplasmic reticulum membrane. It catalyses the reaction a 1-acyl-sn-glycero-3-phosphocholine + H2O = sn-glycerol 3-phosphocholine + a fatty acid + H(+). Its activity is regulated as follows. Inhibited by organophosphorus esters. Its function is as follows. Intracellular phospholipase B that catalyzes the double deacylation of phosphatidylcholine (PC) to glycerophosphocholine (GroPCho). Plays an important role in membrane lipid homeostasis. Responsible for the rapid PC turnover in response to inositol, elevated temperatures, or when choline is present in the growth medium. In Candida glabrata (strain ATCC 2001 / BCRC 20586 / JCM 3761 / NBRC 0622 / NRRL Y-65 / CBS 138) (Yeast), this protein is Lysophospholipase NTE1 (NTE1).